The chain runs to 316 residues: Protoheme IX farnesyltransferase (316 aa).

9 helical membrane-spanning segments follow: residues 32–52, 53–73, 93–113, 116–136, 152–172, 180–200, 221–241, 252–271, and 289–309; these read VMSL…GHIN, PVLG…SGAL, IPAG…LSGF, VILG…TIFF, NIVI…ACVT, TVLF…LALF, VTKH…VLPS, LVAA…VWRM, and IFYL…AILV.

The protein belongs to the UbiA prenyltransferase family. Protoheme IX farnesyltransferase subfamily.

The protein localises to the cell inner membrane. It catalyses the reaction heme b + (2E,6E)-farnesyl diphosphate + H2O = Fe(II)-heme o + diphosphate. It functions in the pathway porphyrin-containing compound metabolism; heme O biosynthesis; heme O from protoheme: step 1/1. In terms of biological role, converts heme B (protoheme IX) to heme O by substitution of the vinyl group on carbon 2 of heme B porphyrin ring with a hydroxyethyl farnesyl side group. This Rhizobium etli (strain ATCC 51251 / DSM 11541 / JCM 21823 / NBRC 15573 / CFN 42) protein is Protoheme IX farnesyltransferase.